Here is a 598-residue protein sequence, read N- to C-terminus: Transcription factor cpaR (598 aa).

A DNA-binding region (zn(2)-C6 fungal-type) is located at residues 22-51 (CNGCRERKRRCVRRKRELPCLSCQAENRPC).

It is found in the nucleus. In terms of biological role, transcription factor; part of the gene cluster that mediates the biosynthesis of the fungal neurotoxin cyclopiazonic acid (CPA), a nanomolar inhibitor of Ca(2+)-ATPase with a unique pentacyclic indole tetramic acid scaffold. The protein is Transcription factor cpaR of Aspergillus oryzae (Yellow koji mold).